The sequence spans 664 residues: Chaperone protein dnaK1 (664 aa).

Phosphothreonine; by autocatalysis is present on threonine 198.

This sequence belongs to the heat shock protein 70 family.

Its function is as follows. Acts as a chaperone. The sequence is that of Chaperone protein dnaK1 (dnaK1) from Prochlorococcus marinus (strain MIT 9313).